A 41-amino-acid polypeptide reads, in one-letter code: Probable cinnamyl alcohol dehydrogenase 2 (41 aa).

This sequence belongs to the zinc-containing alcohol dehydrogenase family. Zn(2+) serves as cofactor.

The enzyme catalyses (E)-cinnamyl alcohol + NADP(+) = (E)-cinnamaldehyde + NADPH + H(+). It catalyses the reaction (E)-coniferol + NADP(+) = (E)-coniferaldehyde + NADPH + H(+). It carries out the reaction (E)-sinapyl alcohol + NADP(+) = (E)-sinapaldehyde + NADPH + H(+). The catalysed reaction is (E)-4-coumaroyl alcohol + NADP(+) = (E)-4-coumaraldehyde + NADPH + H(+). The enzyme catalyses (E)-caffeyl alcohol + NADP(+) = (E)-caffeyl aldehyde + NADPH + H(+). It functions in the pathway aromatic compound metabolism; phenylpropanoid biosynthesis. Functionally, involved in lignin biosynthesis. Catalyzes the final step specific for the production of lignin monomers, like coniferyl alcohol, sinapyl alcohol and 4-coumaryl alcohol. In Pseudotsuga menziesii (Douglas-fir), this protein is Probable cinnamyl alcohol dehydrogenase 2.